Reading from the N-terminus, the 492-residue chain is Catalase isozyme A (492 aa).

Positions 1-23 are disordered; it reads MDPCKFRPSSSFDTKTTTTNAGA. Positions 8-21 are enriched in polar residues; that stretch reads PSSSFDTKTTTTNA. Residues His-65 and Asn-138 contribute to the active site. Tyr-348 lines the heme pocket.

Belongs to the catalase family. In terms of assembly, homotetramer. The cofactor is heme.

The protein resides in the peroxisome. The protein localises to the glyoxysome. It catalyses the reaction 2 H2O2 = O2 + 2 H2O. Its function is as follows. Occurs in almost all aerobically respiring organisms and serves to protect cells from the toxic effects of hydrogen peroxide. This is Catalase isozyme A from Oryza sativa subsp. indica (Rice).